Here is a 392-residue protein sequence, read N- to C-terminus: Keratin, type I cuticular Ha4 (392 aa).

The tract at residues 1-56 (MSCESCLPALSCRTSCSSRPCVPPSCHGCTLPGACNIPANVGNCNWFCEGSFNGNE) is head. In terms of domain architecture, IF rod spans 56–367 (EKETMQFLND…SLLESEDCNL (312 aa)). The coil 1A stretch occupies residues 57-91 (KETMQFLNDRLASYMEKVRQLERENAELECRIQER). Residues 92–102 (NQQQDPLVCPA) are linker 1. The tract at residues 103-203 (YQAYFRTIEE…HEEEVNTLRC (101 aa)) is coil 1B. Residues 204 to 219 (QLGDRLNVEVDAAPTV) form a linker 12 region. A coil 2 region spans residues 220–363 (DLNRVLNETR…NTYRSLLESE (144 aa)). A tail region spans residues 364–392 (DCNLPCNPCATTNASGSCCGPCGSSKRCC).

Belongs to the intermediate filament family. In terms of tissue distribution, expressed in the hair root in the hair shaft cuticle and cortex.

This Mus musculus (Mouse) protein is Keratin, type I cuticular Ha4.